Consider the following 570-residue polypeptide: MWLLQPLLLCVPLSLAVHGQQKPQVPDYPGELHCGLQSLQFAINPSPGKATPALIVWDNRGLPHKLQNNSGCGTWVRESPGGSVLLDASYSSCYVNEWVSTTQSPGTSRPPTPASRVTPQDSHYVMIVGVEGTDAAGRRVTNTKVLRCPRNPPDQALVSSLSPSPLQNVALEAPNADLCDSVPKWDRLPCASSPITQGDCNKLGCCYKSEANSCYYGNTVTSRCTQDGHFSIAVSRNVTSPPLLLNSLRLAFGKDRECNPVKATRAFALFFFPFNSCGTTRWVTGDQAVYENELVAARDVRTWSHGSITRDSIFRLRVSCSYSVRSNAFPLSVQVFTIPPPHLKTQHGPLTLELKIAKDKHYGSYYTIGDYPVVKLLRDPIYVEVSIRHRTDPSLGLLLHNCWATPGKNSQSLSQWPILVKGCPYVGDNYQTQLIPVQKALDTPFPSYYKRFSIFTFSFVDTMAKWALRGPVYLHCNVSICQPAGTSSCRITCPVARRRRHSDLHHHSSTASISSKGPMILLQATMDSAEKLHKNSSSPIDSQALWMAGLSGTLIFGFLLVSYLAIRKRR.

The first 19 residues, 1-19 (MWLLQPLLLCVPLSLAVHG), serve as a signal peptide directing secretion. At 20–545 (QQKPQVPDYP…SSSPIDSQAL (526 aa)) the chain is on the extracellular side. Asn68 carries N-linked (GlcNAc...) asparagine glycosylation. Residues 177 to 218 (DLCDSVPKWDRLPCASSPITQGDCNKLGCCYKSEANSCYYGN) form the P-type domain. In terms of domain architecture, ZP spans 223–496 (RCTQDGHFSI…SSCRITCPVA (274 aa)). Residue Asn237 is glycosylated (N-linked (GlcNAc...) asparagine). A glycan (O-linked (GalNAc...) threonine) is linked at Thr337. Cys402 and Cys476 are joined by a disulfide. N-linked (GlcNAc...) asparagine glycosylation is found at Asn477 and Asn535. The propeptide at 497 to 570 (RRRRHSDLHH…VSYLAIRKRR (74 aa)) is removed in mature form. The helical transmembrane segment at 546 to 566 (WMAGLSGTLIFGFLLVSYLAI) threads the bilayer. Topologically, residues 567-570 (RKRR) are cytoplasmic.

Belongs to the ZP domain family. ZPB subfamily. In terms of processing, proteolytically cleaved before the transmembrane segment to yield the secreted ectodomain incorporated in the zona pellucida. Expressed in oocytes.

It localises to the zona pellucida. The protein localises to the cell membrane. In terms of biological role, component of the zona pellucida, an extracellular matrix surrounding oocytes which mediates sperm binding, induction of the acrosome reaction and prevents post-fertilization polyspermy. The zona pellucida is composed of 3 to 4 glycoproteins, ZP1, ZP2, ZP3, and ZP4. ZP4 may act as a sperm receptor. This Felis catus (Cat) protein is Zona pellucida sperm-binding protein 4 (ZP4).